Consider the following 701-residue polypeptide: Low-density lipoprotein receptor-related protein 12 (701 aa).

Residues 1 to 334 are Extracellular-facing; it reads GKSEEPNCAC…ENCPVIVPTR (334 aa). 2 consecutive LDL-receptor class A domains span residues 7–43 and 56–97; these read NCACDQFRCGNGKCIPEAWKCNNMDECGDSSDEEICA and PCAY…IDCD. 7 disulfides stabilise this stretch: C8/C20, C15/C33, C27/C42, C57/C74, C64/C87, C81/C96, and C101/C127. Positions 101 to 214 constitute a CUB domain; sequence CGQWLKYFYG…RGFNATYQVD (114 aa). Residues N126 and N208 are each glycosylated (N-linked (GlcNAc...) asparagine). 3 LDL-receptor class A domains span residues 216–253, 254–291, and 292–328; these read FCLPWEIPCGGNWGCYTEQQRCDGYWHCPNGRDEINCT, MCQKEEFPCSRNGVCYPRSDRCNYQNHCPNGSDEKNCF, and FCQPGNFHCKNNRCVFESWVCDSQDDCGDGSDEENCP. 9 disulfide bridges follow: C217/C230, C224/C243, C237/C252, C255/C268, C262/C281, C275/C290, C293/C305, C300/C318, and C312/C327. An N-linked (GlcNAc...) asparagine glycan is attached at N251. N283 carries N-linked (GlcNAc...) asparagine glycosylation. A helical membrane pass occupies residues 335 to 355; the sequence is VITAAVIGSLICGLLLVIALG. Residues 356 to 701 are Cytoplasmic-facing; it reads CTCKLYSLRM…TSDDEALLLC (346 aa). Disordered regions lie at residues 465–520, 535–565, 590–612, and 643–665; these read ADGD…LPQK, ASSSTQSARGGHADNGRDVTSVEPPSVSPAR, SSVSQNQSPLRQLDNGVSGREDD, and DQGQGLRQPYSATNPGVRPSNRD. Composition is skewed to polar residues over residues 590–599 and 643–656; these read SSVSQNQSPL and DQGQGLRQPYSATN.

The protein belongs to the LDLR family. As to quaternary structure, may interact with RACK1, ZFYVE9 and NMRK2.

Its subcellular location is the membrane. The protein localises to the coated pit. Its function is as follows. Probable receptor, which may be involved in the internalization of lipophilic molecules and/or signal transduction. May act as a tumor suppressor. This is Low-density lipoprotein receptor-related protein 12 (LRP12) from Macaca fascicularis (Crab-eating macaque).